A 171-amino-acid polypeptide reads, in one-letter code: NRR repressor homolog 2 (171 aa).

Residues 1–12 (MEARLSTGEKTK) are compositionally biased toward basic and acidic residues. 3 disordered regions span residues 1 to 45 (MEAR…QQQM), 65 to 94 (AALP…APWR), and 119 to 143 (TTKG…EEDK). Acidic residues predominate over residues 26–43 (PEEETAAETTTSEEEEQQ).

This sequence belongs to the NPR1-interactor family. As to quaternary structure, interacts with NPR1/NH1. Interacts with NPR3/NH3.

The protein localises to the nucleus. Functionally, binds to and weakly represses NPR1/NH1-mediated transcriptional activation of LG2 in vitro. The chain is NRR repressor homolog 2 from Oryza sativa subsp. japonica (Rice).